We begin with the raw amino-acid sequence, 144 residues long: Small polypeptide DEVIL 18 (144 aa).

Over residues 30-58 the composition is skewed to low complexity; that stretch reads SFSTKTSSSSSKPVFTRSFSTKPTSYSSS. Residues 30 to 89 are disordered; that stretch reads SFSTKTSSSSSKPVFTRSFSTKPTSYSSSEPIFRRSFSAKPTSSKSPFLSRSGSTKCPVD. Residues 42–58 form a helical membrane-spanning segment; that stretch reads PVFTRSFSTKPTSYSSS. Residues 68 to 84 show a composition bias toward polar residues; sequence AKPTSSKSPFLSRSGST. The interval 108-139 is required for DVL/RTFL small polypeptide activity; it reads SVTRKCRNMAKEHKSRFYIMKRCVLMLVCWHK.

Belongs to the DVL/RTFL small polypeptides family.

The protein localises to the cell membrane. Small polypeptide acting as a regulatory molecule which coordinates cellular responses required for differentiation, growth and development, probably by restricting polar cell proliferation in lateral organs and coordinating socket cell recruitment and differentiation at trichome sites. The sequence is that of Small polypeptide DEVIL 18 from Arabidopsis thaliana (Mouse-ear cress).